Consider the following 234-residue polypeptide: Ubiquinone biosynthesis O-methyltransferase (234 aa).

Positions 39, 59, 80, and 124 each coordinate S-adenosyl-L-methionine.

The protein belongs to the methyltransferase superfamily. UbiG/COQ3 family.

It carries out the reaction a 3-demethylubiquinol + S-adenosyl-L-methionine = a ubiquinol + S-adenosyl-L-homocysteine + H(+). The catalysed reaction is a 3-(all-trans-polyprenyl)benzene-1,2-diol + S-adenosyl-L-methionine = a 2-methoxy-6-(all-trans-polyprenyl)phenol + S-adenosyl-L-homocysteine + H(+). It functions in the pathway cofactor biosynthesis; ubiquinone biosynthesis. O-methyltransferase that catalyzes the 2 O-methylation steps in the ubiquinone biosynthetic pathway. This chain is Ubiquinone biosynthesis O-methyltransferase, found in Aliivibrio fischeri (strain MJ11) (Vibrio fischeri).